Reading from the N-terminus, the 417-residue chain is Gamma-glutamyl phosphate reductase (417 aa).

The protein belongs to the gamma-glutamyl phosphate reductase family.

Its subcellular location is the cytoplasm. It catalyses the reaction L-glutamate 5-semialdehyde + phosphate + NADP(+) = L-glutamyl 5-phosphate + NADPH + H(+). It functions in the pathway amino-acid biosynthesis; L-proline biosynthesis; L-glutamate 5-semialdehyde from L-glutamate: step 2/2. Its function is as follows. Catalyzes the NADPH-dependent reduction of L-glutamate 5-phosphate into L-glutamate 5-semialdehyde and phosphate. The product spontaneously undergoes cyclization to form 1-pyrroline-5-carboxylate. The polypeptide is Gamma-glutamyl phosphate reductase (Klebsiella pneumoniae subsp. pneumoniae (strain ATCC 700721 / MGH 78578)).